Reading from the N-terminus, the 122-residue chain is Large ribosomal subunit protein uL14 (122 aa).

The protein belongs to the universal ribosomal protein uL14 family. In terms of assembly, part of the 50S ribosomal subunit. Forms a cluster with proteins L3 and L19. In the 70S ribosome, L14 and L19 interact and together make contacts with the 16S rRNA in bridges B5 and B8.

Binds to 23S rRNA. Forms part of two intersubunit bridges in the 70S ribosome. This Brucella anthropi (strain ATCC 49188 / DSM 6882 / CCUG 24695 / JCM 21032 / LMG 3331 / NBRC 15819 / NCTC 12168 / Alc 37) (Ochrobactrum anthropi) protein is Large ribosomal subunit protein uL14.